The following is a 104-amino-acid chain: UPF0145 protein STH1265 (104 aa).

It belongs to the UPF0145 family.

In Symbiobacterium thermophilum (strain DSM 24528 / JCM 14929 / IAM 14863 / T), this protein is UPF0145 protein STH1265.